A 193-amino-acid chain; its full sequence is FMN-dependent NADH:quinone oxidoreductase 1 (193 aa).

Residues Ser-9, 15-17, and 85-88 contribute to the FMN site; these read SIS and MYNF.

This sequence belongs to the azoreductase type 1 family. As to quaternary structure, homodimer. It depends on FMN as a cofactor.

The enzyme catalyses 2 a quinone + NADH + H(+) = 2 a 1,4-benzosemiquinone + NAD(+). The catalysed reaction is N,N-dimethyl-1,4-phenylenediamine + anthranilate + 2 NAD(+) = 2-(4-dimethylaminophenyl)diazenylbenzoate + 2 NADH + 2 H(+). Quinone reductase that provides resistance to thiol-specific stress caused by electrophilic quinones. Functionally, also exhibits azoreductase activity. Catalyzes the reductive cleavage of the azo bond in aromatic azo compounds to the corresponding amines. This is FMN-dependent NADH:quinone oxidoreductase 1 from Xanthomonas axonopodis pv. citri (strain 306).